The following is a 652-amino-acid chain: Zinc finger protein 432 (652 aa).

One can recognise a KRAB domain in the interval Leu8 to Pro79. Residue Tyr41 is modified to 3'-nitrotyrosine. ADP-ribosylserine occurs at positions 139 and 164. C2H2-type zinc fingers lie at residues His205 to His227, Tyr233 to His255, Phe261 to His283, Tyr289 to His311, Tyr317 to His339, Tyr345 to His367, Tyr373 to His395, Tyr401 to His423, Tyr429 to His451, Tyr457 to His479, Tyr485 to His507, Tyr513 to His535, Phe541 to His563, Lys567 to His591, Tyr597 to His619, and Phe625 to His647. Ser246 is modified (ADP-ribosylserine). ADP-ribosylserine is present on Ser330. Ser414 bears the ADP-ribosylserine mark.

It belongs to the krueppel C2H2-type zinc-finger protein family. As to quaternary structure, interacts with PARP1 and several chromatin remodeling proteins; the interaction with PARP1 reshapes ZNF432 interacting proteins. Interacts with TRIM28; the interaction is independent of PARP1.

It is found in the nucleus. Its function is as follows. Homologous recombination repressor that functions as a poly(ADP-ribose) (PAR) reader regulating DNA damage response and PARP inhibition. Once recruited to DNA lesions via DNA-, in a PAR-dependent mechanism, stimulates PARP1 activity. Binds preferentially ssDNA and inhibits EXO1-mediated resection, probably through a PAR-independent DNA-binding mechanism. The polypeptide is Zinc finger protein 432 (Homo sapiens (Human)).